We begin with the raw amino-acid sequence, 374 residues long: S-adenosylmethionine:tRNA ribosyltransferase-isomerase (374 aa).

It belongs to the QueA family. As to quaternary structure, monomer.

It is found in the cytoplasm. The enzyme catalyses 7-aminomethyl-7-carbaguanosine(34) in tRNA + S-adenosyl-L-methionine = epoxyqueuosine(34) in tRNA + adenine + L-methionine + 2 H(+). The protein operates within tRNA modification; tRNA-queuosine biosynthesis. Its function is as follows. Transfers and isomerizes the ribose moiety from AdoMet to the 7-aminomethyl group of 7-deazaguanine (preQ1-tRNA) to give epoxyqueuosine (oQ-tRNA). The sequence is that of S-adenosylmethionine:tRNA ribosyltransferase-isomerase from Sorangium cellulosum (strain So ce56) (Polyangium cellulosum (strain So ce56)).